Consider the following 116-residue polypeptide: Methionine-R-sulfoxide reductase B1 (116 aa).

In terms of domain architecture, MsrB spans 1–106 (MSFCSFFGGE…FSSSLKFIPK (106 aa)). 4 residues coordinate Zn(2+): C23, C26, C71, and C74. Residue U95 is the Nucleophile of the active site. A non-standard amino acid (selenocysteine) is located at residue U95.

Belongs to the MsrB Met sulfoxide reductase family. Requires Zn(2+) as cofactor. Truncated MSRB1/SEPX1 proteins produced by failed UGA/Sec decoding are ubiquitinated by the CRL2(FEM1C) E3 ubiquitin-protein ligase complex.

The protein resides in the cytoplasm. Its subcellular location is the nucleus. The protein localises to the cytoskeleton. It carries out the reaction L-methionyl-[protein] + [thioredoxin]-disulfide + H2O = L-methionyl-(R)-S-oxide-[protein] + [thioredoxin]-dithiol. The enzyme catalyses [thioredoxin]-disulfide + L-methionine + H2O = L-methionine (R)-S-oxide + [thioredoxin]-dithiol. In terms of biological role, methionine-sulfoxide reductase that specifically reduces methionine (R)-sulfoxide back to methionine. While in many cases, methionine oxidation is the result of random oxidation following oxidative stress, methionine oxidation is also a post-translational modification that takes place on specific residue. Acts as a regulator of actin assembly by reducing methionine (R)-sulfoxide mediated by MICALs (MICAL1, MICAL2 or MICAL3) on actin, thereby promoting filament repolymerization. Plays a role in innate immunity by reducing oxidized actin, leading to actin repolymerization in macrophages. The polypeptide is Methionine-R-sulfoxide reductase B1 (Msrb1) (Rattus norvegicus (Rat)).